We begin with the raw amino-acid sequence, 553 residues long: Methionine--tRNA ligase (553 aa).

Positions 12-22 match the 'HIGH' region motif; it reads PYANSQLHLGH. Zn(2+) is bound by residues cysteine 144, cysteine 147, cysteine 157, and cysteine 160. Residues 332-336 carry the 'KMSKS' region motif; the sequence is KFSKS. Lysine 335 serves as a coordination point for ATP.

Belongs to the class-I aminoacyl-tRNA synthetase family. MetG type 1 subfamily. In terms of assembly, monomer. It depends on Zn(2+) as a cofactor.

It localises to the cytoplasm. It catalyses the reaction tRNA(Met) + L-methionine + ATP = L-methionyl-tRNA(Met) + AMP + diphosphate. Is required not only for elongation of protein synthesis but also for the initiation of all mRNA translation through initiator tRNA(fMet) aminoacylation. The chain is Methionine--tRNA ligase from Dehalococcoides mccartyi (strain CBDB1).